The following is a 483-amino-acid chain: MTTLAVLSVASELFPLIKTGGLADVAGALPAALRANDVAVTSLLPGYPAVLGGIEDPQQVHSFNELFGGTARLLAARCGDLDLFVLDAPHLYVRPGNPYVGPDGKDWPDNGLRFAALAQVGAALGQGLLPHYKPDVLHAHDWQTGLLPAYLKYSGRPGPKTVFTIHNLAFQGRFPYELLGRLGLPERAFGLDGIEYYGGIGYLKAGLQLADRITTVSPSYAAEIQGSEAGMGLDGLLQLRADRLSGILNGIDTDVWNPASDALISATYDVESIAARARNKKVLQARFGLKPEPGALLYGVISRLSWQKGLDLLLQALPQLIGGGAQLALLGSGDAELEQGYAAAARKYPGQVGAVIGYDEALAHQIQAGADALLVPSRFEPCGLTQLCALRYGAVPVVARVGGLADTVVDANEMATATGVATGVQFAPVTTDALIKAFGKTRALFADVVAWRNLQINGMTTDVSWKNPAQHYAKLYRDLVAER.

K18 is a binding site for ADP-alpha-D-glucose.

It belongs to the glycosyltransferase 1 family. Bacterial/plant glycogen synthase subfamily.

The enzyme catalyses [(1-&gt;4)-alpha-D-glucosyl](n) + ADP-alpha-D-glucose = [(1-&gt;4)-alpha-D-glucosyl](n+1) + ADP + H(+). The protein operates within glycan biosynthesis; glycogen biosynthesis. Synthesizes alpha-1,4-glucan chains using ADP-glucose. The protein is Glycogen synthase of Rhodopseudomonas palustris (strain TIE-1).